A 691-amino-acid chain; its full sequence is Proprotein convertase subtilisin/kexin type 9 (691 aa).

The first 30 residues, 1-30 (MGIRCSTWLRWPLSPQLLLLLLLCPTGSRA), serve as a signal peptide directing secretion. Residues 31–151 (QDEDGDYEEL…IEEDSLVFAQ (121 aa)) constitute a propeptide that is removed on maturation. Residue Tyr37 is modified to Sulfotyrosine. Ser46 carries the phosphoserine modification. A Peptidase S8 domain is found at 154-441 (PWNLERIIPA…QRVLTPNRVA (288 aa)). Active-site charge relay system residues include Asp185 and His225. Disulfide bonds link Cys222–Cys254 and Cys322–Cys357. Residue Ser385 is the Charge relay system of the active site. Residues 449-691 (ETGGQLLCRT…PSAKASWVHQ (243 aa)) are C-terminal domain. 3 disulfide bridges follow: Cys456–Cys526, Cys476–Cys525, and Cys485–Cys508. Positions 495-497 (RGD) match the Cell attachment site motif. Residue Asn532 is glycosylated (N-linked (GlcNAc...) asparagine). 6 cysteine pairs are disulfide-bonded: Cys533–Cys600, Cys551–Cys599, Cys561–Cys587, Cys607–Cys678, Cys625–Cys677, and Cys634–Cys653. Ser687 carries the phosphoserine modification.

This sequence belongs to the peptidase S8 family. In terms of assembly, monomer. Can self-associate to form dimers and higher multimers which may have increased LDLR degrading activity. The precursor protein but not the mature protein may form multimers. Interacts with APOB, VLDLR, LRP8/APOER2 and BACE1. The full-length immature form (pro-PCSK9) interacts with SCNN1A, SCNN1B and SCNN1G. The pro-PCSK9 form (via C-terminal domain) interacts with LDLR. Interacts (via the C-terminal domain) with ANXA2 (via repeat Annexin 1); the interaction inhibits the degradation of LDLR. Requires Ca(2+) as cofactor. Cleavage by furin and PCSK5 generates a truncated inactive protein that is unable to induce LDLR degradation. In terms of processing, undergoes autocatalytic cleavage in the endoplasmic reticulum to release the propeptide from the N-terminus and the cleavage of the propeptide is strictly required for its maturation and activation. The cleaved propeptide however remains associated with the catalytic domain through non-covalent interactions, preventing potential substrates from accessing its active site. As a result, it is secreted from cells as a propeptide-containing, enzymatically inactive protein. Post-translationally, phosphorylation protects the propeptide against proteolysis. In terms of tissue distribution, highly expressed in 12-day embryo. In the adult, strongly expressed in liver, small intestine, jejunum, and to a lesser extent in kidney, lung, spleen and thymus. Expression in the liver is up-regulated following partial hepatectomy.

Its subcellular location is the cytoplasm. The protein resides in the secreted. The protein localises to the endosome. It is found in the lysosome. It localises to the cell surface. Its subcellular location is the endoplasmic reticulum. The protein resides in the golgi apparatus. Its proteolytic activity is autoinhibited by the non-covalent binding of the propeptide to the catalytic domain. Inhibited by EGTA. Functionally, crucial player in the regulation of plasma cholesterol homeostasis. Binds to low-density lipid receptor family members: low density lipoprotein receptor (LDLR), very low density lipoprotein receptor (VLDLR), apolipoprotein E receptor (LRP1/APOER) and apolipoprotein receptor 2 (LRP8/APOER2), and promotes their degradation in intracellular acidic compartments. Acts via a non-proteolytic mechanism to enhance the degradation of the hepatic LDLR through a clathrin LDLRAP1/ARH-mediated pathway. May prevent the recycling of LDLR from endosomes to the cell surface or direct it to lysosomes for degradation. Can induce ubiquitination of LDLR leading to its subsequent degradation. Inhibits intracellular degradation of APOB via the autophagosome/lysosome pathway in a LDLR-independent manner. Involved in the disposal of non-acetylated intermediates of BACE1 in the early secretory pathway. Inhibits epithelial Na(+) channel (ENaC)-mediated Na(+) absorption by reducing ENaC surface expression primarily by increasing its proteasomal degradation. Regulates neuronal apoptosis via modulation of LRP8/APOER2 levels and related anti-apoptotic signaling pathways. This is Proprotein convertase subtilisin/kexin type 9 (Pcsk9) from Rattus norvegicus (Rat).